Reading from the N-terminus, the 721-residue chain is Exo beta-1,2-glucooligosaccharide sophorohydrolase (non-reducing end) (721 aa).

The N-terminal stretch at 1–18 (MKHIALLTTLLLSASLQA) is a signal peptide. Positions 474–708 (NHKLIGWNET…LLWNLFMSHP (235 aa)) constitute a Glycoamylase-like domain.

In terms of assembly, monomer.

The protein localises to the periplasm. The enzyme catalyses [(1-&gt;2)-beta-D-glucosyl](n) + H2O = [(1-&gt;2)-beta-D-glucosyl](n-2) + sophorose. Catalyzes the hydrolysis of linear beta-1,2-glucan and beta-1,2-glucooligosaccharides with degrees of polymerization (DPs) greater than or equal to 4, to produce sophorose. The best substrates are tetra- and pentasaccharides. Acts as an exo-type enzyme that releases sophorose from the non-reducing end of the substrate. It cannot hydrolyze cyclic beta-1,2-glucans. The chain is Exo beta-1,2-glucooligosaccharide sophorohydrolase (non-reducing end) from Parabacteroides distasonis (strain ATCC 8503 / DSM 20701 / CIP 104284 / JCM 5825 / NCTC 11152).